We begin with the raw amino-acid sequence, 272 residues long: Indole-3-glycerol phosphate synthase (272 aa).

The protein belongs to the TrpC family.

The catalysed reaction is 1-(2-carboxyphenylamino)-1-deoxy-D-ribulose 5-phosphate + H(+) = (1S,2R)-1-C-(indol-3-yl)glycerol 3-phosphate + CO2 + H2O. It functions in the pathway amino-acid biosynthesis; L-tryptophan biosynthesis; L-tryptophan from chorismate: step 4/5. In Mycolicibacterium vanbaalenii (strain DSM 7251 / JCM 13017 / BCRC 16820 / KCTC 9966 / NRRL B-24157 / PYR-1) (Mycobacterium vanbaalenii), this protein is Indole-3-glycerol phosphate synthase.